Here is a 1103-residue protein sequence, read N- to C-terminus: Coatomer subunit beta (1103 aa).

HEAT repeat units lie at residues 51-89 (EAYT…CRPD), 94-129 (EEMI…RQFK), 130-166 (VLEP…NFGL), 247-284 (QQKA…APVS), 322-359 (RTME…KNSV), 365-404 (VLKR…RFPE), and 405-441 (AAAS…TCVH).

In terms of assembly, oligomeric complex that consists of at least the alpha, beta, beta', gamma, delta, epsilon and zeta subunits.

It is found in the cytoplasm. Its subcellular location is the golgi apparatus membrane. The protein resides in the cytoplasmic vesicle. The protein localises to the COPI-coated vesicle membrane. Functionally, the coatomer is a cytosolic protein complex that binds to dilysine motifs and reversibly associates with Golgi non-clathrin-coated vesicles, which further mediate biosynthetic protein transport from the ER, via the Golgi up to the trans Golgi network. Coatomer complex is required for budding from Golgi membranes, and is essential for the retrograde Golgi-to-ER transport of dilysine-tagged proteins. This is Coatomer subunit beta from Toxoplasma gondii.